Reading from the N-terminus, the 184-residue chain is Photosystem I assembly protein Ycf4 (184 aa).

2 helical membrane-spanning segments follow: residues 19 to 39 (ISNFCWACILFLGSLGFLLVG) and 57 to 77 (IVFFPQGIVMCFYGIAGLFIS).

This sequence belongs to the Ycf4 family.

It localises to the plastid. Its subcellular location is the chloroplast thylakoid membrane. Seems to be required for the assembly of the photosystem I complex. The sequence is that of Photosystem I assembly protein Ycf4 from Nymphaea alba (White water-lily).